The following is a 342-amino-acid chain: Nucleoid-associated protein Sputcn32_2288 (342 aa).

It belongs to the YejK family.

The protein resides in the cytoplasm. It localises to the nucleoid. The polypeptide is Nucleoid-associated protein Sputcn32_2288 (Shewanella putrefaciens (strain CN-32 / ATCC BAA-453)).